Reading from the N-terminus, the 332-residue chain is Phosphate acyltransferase (332 aa).

It belongs to the PlsX family. Homodimer. Probably interacts with PlsY.

It is found in the cytoplasm. It catalyses the reaction a fatty acyl-[ACP] + phosphate = an acyl phosphate + holo-[ACP]. The protein operates within lipid metabolism; phospholipid metabolism. Functionally, catalyzes the reversible formation of acyl-phosphate (acyl-PO(4)) from acyl-[acyl-carrier-protein] (acyl-ACP). This enzyme utilizes acyl-ACP as fatty acyl donor, but not acyl-CoA. The sequence is that of Phosphate acyltransferase from Fusobacterium nucleatum subsp. nucleatum (strain ATCC 25586 / DSM 15643 / BCRC 10681 / CIP 101130 / JCM 8532 / KCTC 2640 / LMG 13131 / VPI 4355).